The primary structure comprises 285 residues: Energy-coupling factor transporter ATP-binding protein EcfA2 (285 aa).

The ABC transporter domain occupies 3 to 245 (IKIENLNHIY…VETLEKIGLA (243 aa)). Position 40 to 47 (40 to 47 (GHTGSGKS)) interacts with ATP.

It belongs to the ABC transporter superfamily. Energy-coupling factor EcfA family. In terms of assembly, forms a stable energy-coupling factor (ECF) transporter complex composed of 2 membrane-embedded substrate-binding proteins (S component), 2 ATP-binding proteins (A component) and 2 transmembrane proteins (T component).

Its subcellular location is the cell membrane. Its function is as follows. ATP-binding (A) component of a common energy-coupling factor (ECF) ABC-transporter complex. Unlike classic ABC transporters this ECF transporter provides the energy necessary to transport a number of different substrates. The polypeptide is Energy-coupling factor transporter ATP-binding protein EcfA2 (Clostridium perfringens (strain 13 / Type A)).